The sequence spans 717 residues: Mitotic spindle assembly checkpoint protein MAD1 (717 aa).

An N-acetylmethionine modification is found at Met-1. Ser-16 is subject to Phosphoserine. Residues 46–631 (EQSMQLEERA…QTKIQEFRKV (586 aa)) adopt a coiled-coil conformation. Lys-61 bears the N6-acetyllysine; alternate mark. Lys-61 is covalently cross-linked (Glycyl lysine isopeptide (Lys-Gly) (interchain with G-Cter in SUMO2); alternate). Positions 79–82 (KRAR) match the Nuclear localization signal motif. Ser-214 and Ser-428 each carry phosphoserine. The segment at 380-532 (LLEERKKREI…EMQMERLTLQ (153 aa)) is necessary for interaction with NEK2. The tract at residues 540–551 (TKVLHMSLNPAS) is necessary for interaction with MAD2L1.

Belongs to the MAD1 family. In terms of assembly, homodimer. Dimerizes via its N- and C- terminal regions. Heterodimerizes with MAD2L1 in order to form a tetrameric MAD1L1-MAD2L1 core complex. Interacts with the closed conformation form of MAD2L1 (C-MAD2) and open conformation form of MAD2L1 (O-MAD2). It is unclear whether MAD1L1 dimerization promotes the conversion of closed to open conformation of MAD2L1. Formation of a heterotetrameric core complex containing two molecules each of MAD1L1 and of MAD2L1 promotes binding of another molecule of MAD2L1 to each MAD2L1, resulting in a heterohexamer. Perturbation of the original MAD1L1-MAD2L1 structure by the spindle checkpoint may decrease MAD2L1 affinity for MAD1L1. CDC20 can compete with MAD1L1 for MAD2L1 binding, until the attachment and/or tension dampen the checkpoint signal, preventing further release of MAD2L1 on to CDC20. Also able to interact with the BUB1/BUB3 complex. Interacts with NEK2. Interacts with TTK. Interacts with TPR; the interactions occurs in a microtubule-independent manner. Interacts with IK. Interacts with the viral Tax protein. Interacts with PRAP1. Post-translationally, phosphorylated; by BUB1. Become hyperphosphorylated in late S through M phases or after mitotic spindle damage.

It localises to the nucleus. Its subcellular location is the chromosome. It is found in the centromere. The protein resides in the kinetochore. The protein localises to the nucleus envelope. It localises to the cytoplasm. Its subcellular location is the cytoskeleton. It is found in the microtubule organizing center. The protein resides in the centrosome. The protein localises to the spindle. It localises to the spindle pole. Functionally, component of the spindle-assembly checkpoint that prevents the onset of anaphase until all chromosomes are properly aligned at the metaphase plate. Forms a heterotetrameric complex with the closed conformation form of MAD2L1 (C-MAD2) at unattached kinetochores during prometaphase, recruits an open conformation of MAD2L1 (O-MAD2) and promotes the conversion of O-MAD2 to C-MAD2, which ensures mitotic checkpoint signaling. The polypeptide is Mitotic spindle assembly checkpoint protein MAD1 (MAD1L1) (Cricetulus griseus (Chinese hamster)).